A 187-amino-acid polypeptide reads, in one-letter code: Protein GrpE (187 aa).

Positions Met1 to Leu38 are disordered. Residues Asn11 to Glu34 are compositionally biased toward acidic residues.

Belongs to the GrpE family. As to quaternary structure, homodimer.

The protein resides in the cytoplasm. In terms of biological role, participates actively in the response to hyperosmotic and heat shock by preventing the aggregation of stress-denatured proteins, in association with DnaK and GrpE. It is the nucleotide exchange factor for DnaK and may function as a thermosensor. Unfolded proteins bind initially to DnaJ; upon interaction with the DnaJ-bound protein, DnaK hydrolyzes its bound ATP, resulting in the formation of a stable complex. GrpE releases ADP from DnaK; ATP binding to DnaK triggers the release of the substrate protein, thus completing the reaction cycle. Several rounds of ATP-dependent interactions between DnaJ, DnaK and GrpE are required for fully efficient folding. This Bacillus subtilis (strain 168) protein is Protein GrpE.